The sequence spans 317 residues: L-lactate dehydrogenase 1 (317 aa).

NAD(+) contacts are provided by residues V17, D38, K43, Y69, and 83-84 (GA). Substrate contacts are provided by Q86 and R92. Residues S105, 122–124 (ATN), and S147 contribute to the NAD(+) site. 124 to 127 (NPVD) contacts substrate. A substrate-binding site is contributed by 152 to 155 (DSAR). Catalysis depends on H179, which acts as the Proton acceptor. Residue Y223 is modified to Phosphotyrosine. A substrate-binding site is contributed by T232.

The protein belongs to the LDH/MDH superfamily. LDH family. In terms of assembly, homotetramer.

It is found in the cytoplasm. The enzyme catalyses (S)-lactate + NAD(+) = pyruvate + NADH + H(+). The protein operates within fermentation; pyruvate fermentation to lactate; (S)-lactate from pyruvate: step 1/1. Its function is as follows. Catalyzes the conversion of lactate to pyruvate (Potential). Appears to be the primary factor that allows S.aureus growth during nitrosative stress in both aerobically and anaerobically cultured cells. In Staphylococcus aureus (strain JH1), this protein is L-lactate dehydrogenase 1.